The chain runs to 224 residues: Urease accessory protein UreF (224 aa).

Belongs to the UreF family. As to quaternary structure, ureD, UreF and UreG form a complex that acts as a GTP-hydrolysis-dependent molecular chaperone, activating the urease apoprotein by helping to assemble the nickel containing metallocenter of UreC. The UreE protein probably delivers the nickel.

It is found in the cytoplasm. Its function is as follows. Required for maturation of urease via the functional incorporation of the urease nickel metallocenter. This chain is Urease accessory protein UreF, found in Pseudomonas savastanoi pv. phaseolicola (strain 1448A / Race 6) (Pseudomonas syringae pv. phaseolicola (strain 1448A / Race 6)).